We begin with the raw amino-acid sequence, 300 residues long: Cis-3-alkyl-4-alkyloxetan-2-one decarboxylase (300 aa).

Positions 33–282 (VVVMLHGNPS…DDANHYVLED (250 aa)) constitute an AB hydrolase-1 domain.

This sequence belongs to the AB hydrolase superfamily. In terms of assembly, homotetramer. Forms a complex with OleC and OleD.

The protein resides in the cytoplasm. The enzyme catalyses a cis-3-alkyl-4-alkyloxetan-2-one = a cis-alkene + CO2. Involved in olefin biosynthesis. Catalyzes the elimination of carbon dioxide from beta-lactones to form the final olefin product. This Xanthomonas campestris pv. campestris (strain ATCC 33913 / DSM 3586 / NCPPB 528 / LMG 568 / P 25) protein is Cis-3-alkyl-4-alkyloxetan-2-one decarboxylase.